Here is a 167-residue protein sequence, read N- to C-terminus: Phosphopantetheine adenylyltransferase (167 aa).

Thr10 contributes to the substrate binding site. ATP-binding positions include 10–11 and His18; that span reads TF. Lys42, Leu75, and Arg89 together coordinate substrate. Residues 90–92, Glu100, and 125–131 contribute to the ATP site; these read GVR and YTYVASS.

It belongs to the bacterial CoaD family. Homohexamer. Requires Mg(2+) as cofactor.

It is found in the cytoplasm. It catalyses the reaction (R)-4'-phosphopantetheine + ATP + H(+) = 3'-dephospho-CoA + diphosphate. Its pathway is cofactor biosynthesis; coenzyme A biosynthesis; CoA from (R)-pantothenate: step 4/5. Functionally, reversibly transfers an adenylyl group from ATP to 4'-phosphopantetheine, yielding dephospho-CoA (dPCoA) and pyrophosphate. In Chlorobium phaeobacteroides (strain DSM 266 / SMG 266 / 2430), this protein is Phosphopantetheine adenylyltransferase.